The primary structure comprises 154 residues: Cindoxin (154 aa).

The Flavodoxin-like domain occupies 3-145 (ALILYGTETG…TAEEWAREIL (143 aa)). FMN contacts are provided by residues 9–13 (TETGN) and 89–120 (VFGLGDSYYTTFNQAGATAATILASLGGTQVG).

The cofactor is FMN.

Its function is as follows. Involved in the degradation of cineol (eucalyptol). The FMN protein, cindoxin, shuttles electrons between the FAD-containing cindoxin reductase (CinB) and 1,8-cineole 2-endo-monooxygenase (CinA). The polypeptide is Cindoxin (cinC) (Citrobacter braakii).